Consider the following 228-residue polypeptide: Ankyrin repeat domain-containing protein 46 (228 aa).

ANK repeat units lie at residues 11-40, 44-74, 77-103, and 107-138; these read QTNV…DPNI, RGRT…PLAT, QGNT…KIDI, and QGAT…EVKG. Residues 195-215 form a helical membrane-spanning segment; the sequence is VLLLILVIALLSLGIAYYVSG.

It localises to the membrane. This Mus musculus (Mouse) protein is Ankyrin repeat domain-containing protein 46 (Ankrd46).